Here is a 420-residue protein sequence, read N- to C-terminus: Glutamyl-tRNA reductase (420 aa).

Substrate is bound by residues 49 to 52, Ser-109, 114 to 116, and Gln-120; these read TCNR and EPQ. The active-site Nucleophile is Cys-50. 189–194 contacts NADP(+); it reads GAGETI.

The protein belongs to the glutamyl-tRNA reductase family. As to quaternary structure, homodimer.

It carries out the reaction (S)-4-amino-5-oxopentanoate + tRNA(Glu) + NADP(+) = L-glutamyl-tRNA(Glu) + NADPH + H(+). The protein operates within porphyrin-containing compound metabolism; protoporphyrin-IX biosynthesis; 5-aminolevulinate from L-glutamyl-tRNA(Glu): step 1/2. Catalyzes the NADPH-dependent reduction of glutamyl-tRNA(Glu) to glutamate 1-semialdehyde (GSA). This chain is Glutamyl-tRNA reductase, found in Sodalis glossinidius (strain morsitans).